We begin with the raw amino-acid sequence, 1070 residues long: DNA-directed RNA polymerase subunit beta (1070 aa).

Belongs to the RNA polymerase beta chain family. As to quaternary structure, in plastids the minimal PEP RNA polymerase catalytic core is composed of four subunits: alpha, beta, beta', and beta''. When a (nuclear-encoded) sigma factor is associated with the core the holoenzyme is formed, which can initiate transcription.

It localises to the plastid. The protein localises to the chloroplast. The catalysed reaction is RNA(n) + a ribonucleoside 5'-triphosphate = RNA(n+1) + diphosphate. DNA-dependent RNA polymerase catalyzes the transcription of DNA into RNA using the four ribonucleoside triphosphates as substrates. The polypeptide is DNA-directed RNA polymerase subunit beta (Buxus microphylla (Littleleaf boxwood)).